The following is a 392-amino-acid chain: MANIDNKGQTELDQQDMEDVEDVEEEETGEDANSKARQLTAQMMQNPQVLAALQERLDDLVGTPTGYIESLPKVVKRRVNALKNLQVKCAQIEAKFYEEVHELERKYAALYQPLFDKRSDIINATYEPTEEECEWKVEEEDISGDLKEKAKLEEEKKDEEKEDPKGIPEFWLTVFKNVDLLSDMLQEHDEPILKHLKDIKVKFSDAGQPMSFTLEFYFEPNEFFTNEVLTKTYKMRSEPDESDPFSFDGPEIMGCTGCLIDWKKGKNVTLKTIKKKQKHKGRGTVRTVTKTVPNDSFFNFFTPPEVPENGELDDDAEAILTADFEIGHFLRERIIPRSVLYFTGEAIEDDDDDYDEEGEEADDEEGEEEADEDNDPDYEPKKGQNPAECKQQ.

The disordered stretch occupies residues 1 to 37; the sequence is MANIDNKGQTELDQQDMEDVEDVEEEETGEDANSKAR. Residues 13 to 30 show a composition bias toward acidic residues; the sequence is DQQDMEDVEDVEEEETGE. The short motif at 126-150 is the NAP1L motif element; the sequence is YEPTEEECEWKVEEEDISGDLKEKA. A Nuclear localization signal motif is present at residues 273–279; that stretch reads IKKKQKH. A compositionally biased stretch (acidic residues) spans 346 to 377; it reads AIEDDDDDYDEEGEEADDEEGEEEADEDNDPD. A disordered region spans residues 346–392; it reads AIEDDDDDYDEEGEEADDEEGEEEADEDNDPDYEPKKGQNPAECKQQ.

This sequence belongs to the nucleosome assembly protein (NAP) family. As to quaternary structure, forms homomultimers. Interacts with histone B4. Interacts with the B-type cyclins ccnb1 and ccnb2. In terms of processing, phosphorylated by cyclin B-cdc2 kinase complexes. Initially expressed throughout the embryo with expression higher at the animal pole. Becomes localized to presumptive ectoderm by gastrula stages. By stage 18 (neurula), expressed in the neural plate and posterior to the cement gland. In late neurula/early tailbud stages, expressed in the neural crest, neural tube, eyes, tailbud and ventral blood islands. Adult expression is predominantly in ovaries.

The protein resides in the cytoplasm. The protein localises to the nucleus. Acts as a chaperone for the linker histone to facilitate deposition of histone B4 onto linker DNA. Required for both remodeling of sperm chromatin into nucleosomes, and linker histone binding to nucleosome core dimers. Plays a role in tissue-specific gene regulation. Required for primitive hemopoiesis, acting upstream of tal1/scl. The protein is Nucleosome assembly protein 1-like 1-A (nap1l1-a) of Xenopus laevis (African clawed frog).